We begin with the raw amino-acid sequence, 680 residues long: Probable potassium transport system protein Kup (680 aa).

Transmembrane regions (helical) follow at residues 16 to 36, 60 to 80, 103 to 123, 150 to 170, 177 to 197, 222 to 242, 255 to 275, 302 to 322, 351 to 371, 380 to 400, 407 to 427, and 432 to 452; these read IAGMLITMGVVYGDIGTSPLY, ISLVFWTLMLMTTVKYVLIAL, WLVIPAIIGGATLLADGMLTP, EVIILTVTILSVLFFIQKFGT, FGPIMLIWFTFIGAIGVMNLM, VGILILGSVFLATTGAEALYS, SWPYIAACLVLNYFGQGVWLL, IPAILLATVAAIIASQALISG, LYISIVNWILWAVCLAVVFYF, AYGLAITITMLMTTILLFHYL, WFLAYVVLLFFGAIETIFFIA, and FMHGGYVTVLIAFVILFIMFV.

This sequence belongs to the HAK/KUP transporter (TC 2.A.72) family.

It localises to the cell membrane. The enzyme catalyses K(+)(in) + H(+)(in) = K(+)(out) + H(+)(out). Its function is as follows. Transport of potassium into the cell. Likely operates as a K(+):H(+) symporter. This is Probable potassium transport system protein Kup from Latilactobacillus sakei subsp. sakei (strain 23K) (Lactobacillus sakei subsp. sakei).